The primary structure comprises 35 residues: Beta-theraphotoxin-Hlv1a (35 aa).

Disulfide bonds link Cys2–Cys17, Cys9–Cys24, and Cys16–Cys31.

This sequence belongs to the neurotoxin 10 (Hwtx-1) family. 10 (haplotoxin-1) subfamily. Expressed by the venom gland.

The protein resides in the secreted. Functionally, spider venom neurotoxin that blocks voltage-gated sodium channel Nav1.3/SCN3A in human (IC(50)=1 uM) and rat (IC(50)=1 uM). In Cyriopagopus lividus (Cobalt blue tarantula), this protein is Beta-theraphotoxin-Hlv1a.